The sequence spans 378 residues: Erythronate-4-phosphate dehydrogenase (378 aa).

The substrate site is built by serine 45 and threonine 66. The NAD(+) site is built by aspartate 146 and threonine 175. Arginine 208 is an active-site residue. NAD(+) is bound at residue aspartate 232. The active site involves glutamate 237. Histidine 254 (proton donor) is an active-site residue. Glycine 257 contacts NAD(+). Tyrosine 258 is a binding site for substrate.

Belongs to the D-isomer specific 2-hydroxyacid dehydrogenase family. PdxB subfamily. As to quaternary structure, homodimer.

The protein resides in the cytoplasm. The catalysed reaction is 4-phospho-D-erythronate + NAD(+) = (R)-3-hydroxy-2-oxo-4-phosphooxybutanoate + NADH + H(+). The protein operates within cofactor biosynthesis; pyridoxine 5'-phosphate biosynthesis; pyridoxine 5'-phosphate from D-erythrose 4-phosphate: step 2/5. Its function is as follows. Catalyzes the oxidation of erythronate-4-phosphate to 3-hydroxy-2-oxo-4-phosphonooxybutanoate. The sequence is that of Erythronate-4-phosphate dehydrogenase from Salmonella dublin (strain CT_02021853).